Here is a 146-residue protein sequence, read N- to C-terminus: Hemoglobin subunit beta (146 aa).

Positions 2–146 (EWTDFERATI…VVNSLGRQYH (145 aa)) constitute a Globin domain. H63 and H92 together coordinate heme b.

It belongs to the globin family. As to quaternary structure, heterotetramer of two alpha chains and two beta chains. Can form polymers. Red blood cells.

Functionally, involved in oxygen transport from gills to the various peripheral tissues. This Chelidonichthys kumu (Bluefin gurnard) protein is Hemoglobin subunit beta (hbb).